We begin with the raw amino-acid sequence, 490 residues long: MDLLVDELFADMNADGASPPPPRPAGGPKNTPAAPPLYATGRLSQAQLMPSPPMPVPPAALFNRLLDDLGFSAGPALCTMLDTWNEDLFSALPTNADLYRECKFLSTLPSDVVEWGDAYVPERTQIDIRAHGDVAFPTLPATRDGLGLYYEALSRFFHAELRAREESYRTVLANFCSALYRYLRASVRQLHRQAHMRGRDRDLGEMLRATIADRYYRETARLARVLFLHLYLFLTREILWAAYAEQMMRPDLFDCLCCDLESWRQLAGLFQPFMFVNGALTVRGVPIEARRLRELNHIREHLNLPLVRSAATEEPGAPLTTPPTLHGNQARASGYFMVLIRAKLDSYSSFTTSPSEAVMREHAYSRARTKNNYGSTIEGLLDLPDDDAPEEAGLAAPRLSFLPAGHTRRLSTAPPTDVSLGDELHLDGEDVAMAHADALDDFDLDMLGDGDSPGPGFTPHDSAPYGALDMADFEFEQMFTDALGIDEYGG.

The segment at 12 to 35 (MNADGASPPPPRPAGGPKNTPAAP) is disordered. A phosphoserine mark is found at serine 18, serine 353, serine 411, and serine 452. Positions 411–490 (STAPPTDVSL…DALGIDEYGG (80 aa)) are transcriptional activation.

Belongs to the herpesviridae tegument protein VP16 protein family. Interacts with tegument protein VP22. Interacts with gH (via C-terminus). Interacts with the virion host shutoff protein (vhs). Interacts with VP11/12. Associates with the VP16-induced complex; binding to host HCFC1 activates VP16 for association with the octamer motif-binding host protein POU2F1, to form a multiprotein-DNA complex responsible for activating transcription of the viral immediate early genes. Interacts with host P-TEFb; this interaction recruits P-TEFb to the viral alpha-gene promoters and overcomes transcriptional inhibition by ICP22 and promotes transcription of IE genes.

The protein localises to the virion tegument. It is found in the host nucleus. Its function is as follows. In the early stage of viral replication, acts as a transcriptional activator of immediate-early (IE) gene products (alpha-genes), which is released by invading virions. Recruits P-TEFb to the viral alpha-gene promoters and overcomes transcriptional inhibition by ICP22 to promote transcription of IE genes. VP16-induced complex represents a regulatory switch: when it is on, it promotes IE-gene expression and thus lytic infection, and when it is off, it limits IE-gene transcription favoring latent infection. Acts as a key activator of lytic infection by initiating the lytic program through the assembly of the transcriptional regulatory VP16-induced complex composed of VP16 and two cellular factors, HCFC1 and POU2F1. This complex recognizes the core motif 'TAATGARAT' in alpha-gene promoters. In the late stage of viral replication, VP16, as a tegument, is involved in viral assembly. Functionally, may play a role in the aggregation of tegument proteins around nucleocapsids during virus morphogenesis. The protein is Tegument protein VP16 of Human herpesvirus 1 (strain 17) (HHV-1).